Consider the following 338-residue polypeptide: Ketol-acid reductoisomerase (NADP(+)) (338 aa).

A KARI N-terminal Rossmann domain is found at 1–181 (MKVFYDKDCD…GGGKAGIIET (181 aa)). NADP(+)-binding positions include 24 to 27 (YGSQ), R47, and S52. H107 is a catalytic residue. G133 lines the NADP(+) pocket. The KARI C-terminal knotted domain maps to 182–327 (NFKEETETDL…AQLRAMMPWI (146 aa)). 4 residues coordinate Mg(2+): D190, E194, E226, and E230. Residue S251 participates in substrate binding.

Belongs to the ketol-acid reductoisomerase family. Mg(2+) serves as cofactor.

It carries out the reaction (2R)-2,3-dihydroxy-3-methylbutanoate + NADP(+) = (2S)-2-acetolactate + NADPH + H(+). It catalyses the reaction (2R,3R)-2,3-dihydroxy-3-methylpentanoate + NADP(+) = (S)-2-ethyl-2-hydroxy-3-oxobutanoate + NADPH + H(+). It functions in the pathway amino-acid biosynthesis; L-isoleucine biosynthesis; L-isoleucine from 2-oxobutanoate: step 2/4. Its pathway is amino-acid biosynthesis; L-valine biosynthesis; L-valine from pyruvate: step 2/4. Functionally, involved in the biosynthesis of branched-chain amino acids (BCAA). Catalyzes an alkyl-migration followed by a ketol-acid reduction of (S)-2-acetolactate (S2AL) to yield (R)-2,3-dihydroxy-isovalerate. In the isomerase reaction, S2AL is rearranged via a Mg-dependent methyl migration to produce 3-hydroxy-3-methyl-2-ketobutyrate (HMKB). In the reductase reaction, this 2-ketoacid undergoes a metal-dependent reduction by NADPH to yield (R)-2,3-dihydroxy-isovalerate. The sequence is that of Ketol-acid reductoisomerase (NADP(+)) from Paracidovorax citrulli (strain AAC00-1) (Acidovorax citrulli).